The chain runs to 139 residues: uncharacterized protein (139 aa).

Transmembrane regions (helical) follow at residues A35 to A55 and C119 to V139.

The protein localises to the membrane. This is an uncharacterized protein from Saccharomyces cerevisiae (strain ATCC 204508 / S288c) (Baker's yeast).